A 360-amino-acid polypeptide reads, in one-letter code: UDP-N-acetylglucosamine--N-acetylmuramyl-(pentapeptide) pyrophosphoryl-undecaprenol N-acetylglucosamine transferase (360 aa).

UDP-N-acetyl-alpha-D-glucosamine is bound by residues 11–13 (TGG), N120, R161, S188, and Q282.

The protein belongs to the glycosyltransferase 28 family. MurG subfamily.

It is found in the cell inner membrane. The enzyme catalyses di-trans,octa-cis-undecaprenyl diphospho-N-acetyl-alpha-D-muramoyl-L-alanyl-D-glutamyl-meso-2,6-diaminopimeloyl-D-alanyl-D-alanine + UDP-N-acetyl-alpha-D-glucosamine = di-trans,octa-cis-undecaprenyl diphospho-[N-acetyl-alpha-D-glucosaminyl-(1-&gt;4)]-N-acetyl-alpha-D-muramoyl-L-alanyl-D-glutamyl-meso-2,6-diaminopimeloyl-D-alanyl-D-alanine + UDP + H(+). It functions in the pathway cell wall biogenesis; peptidoglycan biosynthesis. Cell wall formation. Catalyzes the transfer of a GlcNAc subunit on undecaprenyl-pyrophosphoryl-MurNAc-pentapeptide (lipid intermediate I) to form undecaprenyl-pyrophosphoryl-MurNAc-(pentapeptide)GlcNAc (lipid intermediate II). The chain is UDP-N-acetylglucosamine--N-acetylmuramyl-(pentapeptide) pyrophosphoryl-undecaprenol N-acetylglucosamine transferase from Synechococcus sp. (strain RCC307).